The sequence spans 377 residues: Deoxyribonuclease CdiA-o11 (377 aa).

The VENN CT cleavage motif motif lies at 81–84; it reads VENN. Residues 85-233 are inner membrane translocation domain (IMTD), targets to YciB; it reads YLSTNQSLTF…ISFMSRNTAT (149 aa). The segment at 88 to 377 is CT domain, sufficient to interact with CdiI; sequence TNQSLTFDKE…GVKVTVTQVK (290 aa). The tract at residues 222-377 is has DNase activity in vivo, cannot be expressed in the absence of CdiI; the sequence is AAISFMSRNT…GVKVTVTQVK (156 aa). Catalysis depends on residues Glu257, Asp278, Ser289, and Lys291. Zn(2+) is bound by residues Glu257 and Asp278.

As to quaternary structure, interacts with cognate immunity protein CdiI-o11-EC869, which blocks its toxic DNase activity. Zn(2+) serves as cofactor.

The protein resides in the target cell. Its subcellular location is the target cell cytoplasm. Toxic component of a toxin-immunity protein module, which functions as a cellular contact-dependent growth inhibition (CDI) system. CDI modules allow bacteria to communicate with and inhibit the growth of closely related neighboring bacteria in a contact-dependent fashion. The C-terminal 289 residues (the CT fragment) has a strong DNase activity in the presence of Zn(2+), completely degrading supercoiled and linear plasmids, and inhibits growth. In the presence of Mg(2+) it nicks dsDNA. Toxic activity is neutralized by coexpression of the cognate immunity protein CdiI-o11-EC869, but not by non-cognate immunity proteins from other toxin-immunity modules or other strains of E.coli. Gains access to the cytoplasm of target cells by using integral inner membrane protein YciB. Its function is as follows. Expression of this locus confers protection against other bacteria carrying the locus. The protein is Deoxyribonuclease CdiA-o11 (cdiA4) of Escherichia coli O157:H7 (strain EC869).